Reading from the N-terminus, the 359-residue chain is Probable dual-specificity RNA methyltransferase RlmN (359 aa).

The Proton acceptor role is filled by E100. A Radical SAM core domain is found at 106 to 340 (TDKRLTVCVS…VSVRASRGRD (235 aa)). C113 and C345 are joined by a disulfide. Residues C120, C124, and C127 each coordinate [4Fe-4S] cluster. S-adenosyl-L-methionine contacts are provided by residues 167-168 (GE), S197, 226-228 (SLH), and N302. Residue C345 is the S-methylcysteine intermediate of the active site.

The protein belongs to the radical SAM superfamily. RlmN family. It depends on [4Fe-4S] cluster as a cofactor.

The protein localises to the cytoplasm. The enzyme catalyses adenosine(2503) in 23S rRNA + 2 reduced [2Fe-2S]-[ferredoxin] + 2 S-adenosyl-L-methionine = 2-methyladenosine(2503) in 23S rRNA + 5'-deoxyadenosine + L-methionine + 2 oxidized [2Fe-2S]-[ferredoxin] + S-adenosyl-L-homocysteine. The catalysed reaction is adenosine(37) in tRNA + 2 reduced [2Fe-2S]-[ferredoxin] + 2 S-adenosyl-L-methionine = 2-methyladenosine(37) in tRNA + 5'-deoxyadenosine + L-methionine + 2 oxidized [2Fe-2S]-[ferredoxin] + S-adenosyl-L-homocysteine. In terms of biological role, specifically methylates position 2 of adenine 2503 in 23S rRNA and position 2 of adenine 37 in tRNAs. This Prochlorococcus marinus (strain NATL2A) protein is Probable dual-specificity RNA methyltransferase RlmN.